A 313-amino-acid chain; its full sequence is C-type lectin domain-containing protein 162 (313 aa).

The first 17 residues, 1–17 (MNIFTLLFIYFLSDTVA), serve as a signal peptide directing secretion. N28 and N41 each carry an N-linked (GlcNAc...) asparagine glycan. The 118-residue stretch at 28–145 (NATGCFQFFR…DAMFLPFVCE (118 aa)) folds into the C-type lectin domain. C49 and C144 are disulfide-bonded. The N-linked (GlcNAc...) asparagine glycan is linked to N213. The disordered stretch occupies residues 244–313 (VSQTETEMSR…RSKTIQISRG (70 aa)). A compositionally biased stretch (basic and acidic residues) spans 250–259 (EMSRSRKEKE). N-linked (GlcNAc...) asparagine glycans are attached at residues N279 and N300. Residues 291 to 304 (SKEKREREENETIR) are compositionally biased toward basic and acidic residues.

It localises to the secreted. This Caenorhabditis elegans protein is C-type lectin domain-containing protein 162 (clec-162).